The sequence spans 619 residues: N-acetylmuramoyl-L-alanine amidase domain-containing protein SAOUHSC_02979 (619 aa).

Positions Met1–Ala27 are cleaved as a signal peptide. 3 disordered regions span residues Ala25–Asp83, Ser134–Asp226, and Glu238–Asp290. Composition is skewed to basic and acidic residues over residues Pro30–Lys65, Asn73–Asp82, and Glu137–Thr146. The segment covering Asn147–Ser156 has biased composition (low complexity). Positions Ile157–Lys175 are enriched in basic and acidic residues. Residues Ala176–Asn192 show a composition bias toward polar residues. Residues Gln214–Asp226 are compositionally biased toward low complexity. Over residues Glu238–Asn260 the composition is skewed to basic and acidic residues. An N-acetylmuramoyl-L-alanine amidase region spans residues Ile327 to Leu468. The Peptidase C51 domain occupies Asp488–Thr617.

It in the N-terminal section; belongs to the N-acetylmuramoyl-L-alanine amidase 2 family.

It localises to the secreted. This Staphylococcus aureus (strain NCTC 8325 / PS 47) protein is N-acetylmuramoyl-L-alanine amidase domain-containing protein SAOUHSC_02979.